We begin with the raw amino-acid sequence, 1005 residues long: Espin-like protein (1005 aa).

ANK repeat units lie at residues Met1–Ile31, Leu35–Asn64, Asn69–Asp99, Ser103–Leu132, Glu136–Arg166, Ser170–Leu200, Asp204–Ala234, Glu238–Arg267, and Trp270–Leu299. 2 disordered regions span residues Leu333–Gln444 and Leu462–Ala483. The span at Met334–Leu346 shows a compositional bias: pro residues. Over residues Ala468–Thr480 the composition is skewed to polar residues. Residues Leu517–Leu541 adopt a coiled-coil conformation. Disordered regions lie at residues Gly616 to Gln644, Arg695 to Gly730, and Leu773 to Gly795.

Interacts with MYO3A (via C-terminus). Interacts with MYO3B (via C-terminus).

The protein resides in the cell projection. The protein localises to the stereocilium. Functionally, binds to but does not cross-link actin. Required for the formation and maintenance of inner ear hair cell stereocilia and staircase formation. Essential for normal hearing. The sequence is that of Espin-like protein (ESPNL) from Homo sapiens (Human).